A 459-amino-acid chain; its full sequence is Cysteine--tRNA ligase (459 aa).

Cys28 contacts Zn(2+). A 'HIGH' region motif is present at residues 30 to 40 (VTVYDLCHFGH). Cys209, His234, and Glu238 together coordinate Zn(2+). The 'KMSKS' region motif lies at 266 to 270 (KMSKS). Lys269 is a binding site for ATP.

The protein belongs to the class-I aminoacyl-tRNA synthetase family. As to quaternary structure, monomer. Requires Zn(2+) as cofactor.

It localises to the cytoplasm. It carries out the reaction tRNA(Cys) + L-cysteine + ATP = L-cysteinyl-tRNA(Cys) + AMP + diphosphate. The polypeptide is Cysteine--tRNA ligase (Actinobacillus pleuropneumoniae serotype 3 (strain JL03)).